Consider the following 326-residue polypeptide: 3-dehydrosphinganine reductase TSC10A (326 aa).

The Lumenal portion of the chain corresponds to 1 to 7; it reads MAAISPL. The helical transmembrane segment at 8–28 threads the bilayer; sequence FLLFLIPIIPLSLLAILALIV. Topologically, residues 29–264 are cytoplasmic; that stretch reads RPRPIKIPIK…KAMDGIKAGN (236 aa). 7 residues coordinate NADPH: glycine 46, serine 48, serine 49, glycine 50, arginine 71, lysine 75, and aspartate 97. The GXSXG motif lies at 46–50; sequence GGSSG. Serine 174 (proton donor) is an active-site residue. The active-site Proton acceptor is tyrosine 188. Residues tyrosine 188 and lysine 192 each coordinate NADP(+). Lysine 192 acts as the Lowers pKa of active site Tyr in catalysis. A helical transmembrane segment spans residues 265 to 285; sequence FTVSCNFEGFLLSLATTGMSP. Over 286–288 the chain is Lumenal; sequence QRS. The helical transmembrane segment at 289–309 threads the bilayer; that stretch reads FWLAFLEVITAGPIRLIALFF. The Cytoplasmic portion of the chain corresponds to 310-326; it reads QWDWYKAIEKWSKTKTK.

This sequence belongs to the short-chain dehydrogenases/reductases (SDR) family. In terms of tissue distribution, expressed in roots, leaves, stems, flowers and siliques.

It is found in the endoplasmic reticulum membrane. It carries out the reaction sphinganine + NADP(+) = 3-oxosphinganine + NADPH + H(+). The protein operates within lipid metabolism; sphingolipid metabolism. In terms of biological role, catalyzes the reduction of 3'-oxosphinganine (3-ketodihydrosphingosine/KDS) to sphinganine (dihydrosphingosine/DHS), the second step of de novo sphingolipid biosynthesis. In plants, sphingolipids seems to play a critical role in mineral ion homeostasis, most likely through their involvement in the ion transport functionalities of membrane systems in the root. Lacks stereospecificity and can also produce L-threo-DHS in addition to D-erythro-DHS. The chain is 3-dehydrosphinganine reductase TSC10A (TSC10A) from Arabidopsis thaliana (Mouse-ear cress).